Here is a 150-residue protein sequence, read N- to C-terminus: Endoribonuclease YbeY (150 aa).

Zn(2+) contacts are provided by His102, His106, and His112.

Belongs to the endoribonuclease YbeY family. Zn(2+) is required as a cofactor.

Its subcellular location is the cytoplasm. Functionally, single strand-specific metallo-endoribonuclease involved in late-stage 70S ribosome quality control and in maturation of the 3' terminus of the 16S rRNA. In Thermotoga maritima (strain ATCC 43589 / DSM 3109 / JCM 10099 / NBRC 100826 / MSB8), this protein is Endoribonuclease YbeY.